The chain runs to 358 residues: 3-isopropylmalate dehydrogenase (358 aa).

Residue 77–90 (GPKWTNLPPDQQPE) coordinates NAD(+). R98, R108, R137, and D226 together coordinate substrate. The Mg(2+) site is built by D226, D250, and D254. 284–296 (GSAPDIAGKGIAN) contributes to the NAD(+) binding site.

The protein belongs to the isocitrate and isopropylmalate dehydrogenases family. LeuB type 1 subfamily. In terms of assembly, homodimer. Mg(2+) serves as cofactor. Mn(2+) is required as a cofactor.

The protein resides in the cytoplasm. It carries out the reaction (2R,3S)-3-isopropylmalate + NAD(+) = 4-methyl-2-oxopentanoate + CO2 + NADH. The protein operates within amino-acid biosynthesis; L-leucine biosynthesis; L-leucine from 3-methyl-2-oxobutanoate: step 3/4. Its function is as follows. Catalyzes the oxidation of 3-carboxy-2-hydroxy-4-methylpentanoate (3-isopropylmalate) to 3-carboxy-4-methyl-2-oxopentanoate. The product decarboxylates to 4-methyl-2 oxopentanoate. The protein is 3-isopropylmalate dehydrogenase (leuB) of Haemophilus influenzae (strain ATCC 51907 / DSM 11121 / KW20 / Rd).